A 300-amino-acid polypeptide reads, in one-letter code: B1 kinase (300 aa).

The Protein kinase domain maps to Trp16 to Phe282. ATP contacts are provided by residues Ile22–Ile30 and Lys45. The Proton acceptor role is filled by Asp147.

It belongs to the protein kinase superfamily. Ser/Thr protein kinase family. Poxviruses subfamily. Interacts with host JIP1; this interaction increases the amount of MAPK bound to JIP1 and subsequently increases the activity of transcription factors, such as JUN, that respond to these complexes. Interacts with protein OPG198; this interaction inhibits the repressive activity of OPG198 pseudokinase on viral replication factory formation. The cofactor is Mg(2+). Post-translationally, autophosphorylated.

The protein resides in the virion. Its subcellular location is the host cytoplasm. It carries out the reaction L-seryl-[protein] + ATP = O-phospho-L-seryl-[protein] + ADP + H(+). The catalysed reaction is L-threonyl-[protein] + ATP = O-phospho-L-threonyl-[protein] + ADP + H(+). Essential serine/threonine-protein kinase that plays different role in the viral life cycle. Phosphorylates the host small ribosomal protein RACK1 thereby customizing the ribosomes to a state optimal for viral mRNAs (which contain poly-A leaders) but not for host mRNAs. Facilitates viral DNA replication by inhibiting host BANF1, a cellular host defense responsive to foreign DNA. Phosphorylates host BANF1 on serine and threonine residues; this leads to BANF1 relocalization to the cytoplasm, loss of dimerization and impaired DNA binding activity. Indeed, BANF1 activity depends on its DNA-binding property which is blocked by VPK1-mediated phosphorylation. Required for viral intermediate genes expression, probably by inhibiting host BANF1. Modulates cellular responses via host JUN by two different mechanisms, either by direct phosphorylation or by modulation of upstream JIP1-MAPK complexes. Seems to participate in the accumulation/processing of late proteins and thus in virion maturation. In addition, inhibits B12 repressive activity on viral DNA replication via a phosphorylation-dependent mechanism. The chain is B1 kinase (OPG187) from Vaccinia virus (strain Ankara) (VACV).